Consider the following 105-residue polypeptide: NADH-quinone oxidoreductase subunit K (105 aa).

Helical transmembrane passes span 9–29 (PNYYLVLAAVLFTIGAAGVLV), 34–54 (IVLFMCVELMLNAANLTLVTF), and 65–85 (IMAFFVMVVAAAEVVVGLAII).

Belongs to the complex I subunit 4L family. NDH-1 is composed of 14 different subunits. Subunits NuoA, H, J, K, L, M, N constitute the membrane sector of the complex.

The protein localises to the cell membrane. It carries out the reaction a quinone + NADH + 5 H(+)(in) = a quinol + NAD(+) + 4 H(+)(out). In terms of biological role, NDH-1 shuttles electrons from NADH, via FMN and iron-sulfur (Fe-S) centers, to quinones in the respiratory chain. The immediate electron acceptor for the enzyme in this species is believed to be a menaquinone. Couples the redox reaction to proton translocation (for every two electrons transferred, four hydrogen ions are translocated across the cytoplasmic membrane), and thus conserves the redox energy in a proton gradient. This chain is NADH-quinone oxidoreductase subunit K, found in Salinispora tropica (strain ATCC BAA-916 / DSM 44818 / JCM 13857 / NBRC 105044 / CNB-440).